We begin with the raw amino-acid sequence, 315 residues long: Ribosomal RNA small subunit methyltransferase H (315 aa).

S-adenosyl-L-methionine-binding positions include 33 to 35 (GGH), Asp52, Phe84, Asp106, and Gln113. The disordered stretch occupies residues 294 to 315 (SSDELEENNRSHSAKLRVAEKL).

The protein belongs to the methyltransferase superfamily. RsmH family.

The protein localises to the cytoplasm. It catalyses the reaction cytidine(1402) in 16S rRNA + S-adenosyl-L-methionine = N(4)-methylcytidine(1402) in 16S rRNA + S-adenosyl-L-homocysteine + H(+). Functionally, specifically methylates the N4 position of cytidine in position 1402 (C1402) of 16S rRNA. The sequence is that of Ribosomal RNA small subunit methyltransferase H from Lactobacillus johnsonii (strain CNCM I-12250 / La1 / NCC 533).